We begin with the raw amino-acid sequence, 531 residues long: RCC1 and BTB domain-containing protein 1 (531 aa).

RCC1 repeat units lie at residues 40–91 (NDEV…LLST), 93–145 (DGVV…ALAA), 147–198 (GEVF…AVLD), 199–250 (NGEV…ALTD), 252–302 (GLLY…AAKT), and 304–356 (GGHV…FLTV). BTB domains lie at 370 to 437 (ADLK…DLPP) and 470 to 499 (ENAF…INHL).

In terms of tissue distribution, ubiquitously expressed. In the retina, present in the nerve fiber layer and to a lesser extent in the inner and outer plexiform layers (at protein level).

Its subcellular location is the nucleus. In terms of biological role, may be involved in cell cycle regulation by chromatin remodeling. The chain is RCC1 and BTB domain-containing protein 1 (RCBTB1) from Homo sapiens (Human).